The primary structure comprises 314 residues: Testis-specific Y-encoded protein 9 (314 aa).

This sequence belongs to the nucleosome assembly protein (NAP) family.

Its subcellular location is the cytoplasm. It localises to the nucleus. Its function is as follows. May be involved in sperm differentiation and proliferation. This Homo sapiens (Human) protein is Testis-specific Y-encoded protein 9.